The chain runs to 259 residues: Pyridoxine 5'-phosphate synthase (259 aa).

A 3-amino-2-oxopropyl phosphate-binding site is contributed by asparagine 6. 8–9 (DH) is a binding site for 1-deoxy-D-xylulose 5-phosphate. Arginine 17 is a binding site for 3-amino-2-oxopropyl phosphate. Catalysis depends on histidine 42, which acts as the Proton acceptor. 2 residues coordinate 1-deoxy-D-xylulose 5-phosphate: arginine 44 and histidine 49. Residue glutamate 69 is the Proton acceptor of the active site. Position 99 (threonine 99) interacts with 1-deoxy-D-xylulose 5-phosphate. Histidine 212 serves as the catalytic Proton donor. 3-amino-2-oxopropyl phosphate contacts are provided by residues glycine 213 and 234-235 (GH).

Belongs to the PNP synthase family. In terms of assembly, homooctamer; tetramer of dimers.

The protein resides in the cytoplasm. It catalyses the reaction 3-amino-2-oxopropyl phosphate + 1-deoxy-D-xylulose 5-phosphate = pyridoxine 5'-phosphate + phosphate + 2 H2O + H(+). Its pathway is cofactor biosynthesis; pyridoxine 5'-phosphate biosynthesis; pyridoxine 5'-phosphate from D-erythrose 4-phosphate: step 5/5. Catalyzes the complicated ring closure reaction between the two acyclic compounds 1-deoxy-D-xylulose-5-phosphate (DXP) and 3-amino-2-oxopropyl phosphate (1-amino-acetone-3-phosphate or AAP) to form pyridoxine 5'-phosphate (PNP) and inorganic phosphate. In Nautilia profundicola (strain ATCC BAA-1463 / DSM 18972 / AmH), this protein is Pyridoxine 5'-phosphate synthase.